The sequence spans 355 residues: Histidinol-phosphate aminotransferase 2 (355 aa).

The residue at position 210 (Lys210) is an N6-(pyridoxal phosphate)lysine.

This sequence belongs to the class-II pyridoxal-phosphate-dependent aminotransferase family. Histidinol-phosphate aminotransferase subfamily. Homodimer. Pyridoxal 5'-phosphate is required as a cofactor.

It carries out the reaction L-histidinol phosphate + 2-oxoglutarate = 3-(imidazol-4-yl)-2-oxopropyl phosphate + L-glutamate. It participates in amino-acid biosynthesis; L-histidine biosynthesis; L-histidine from 5-phospho-alpha-D-ribose 1-diphosphate: step 7/9. This Gluconobacter oxydans (strain 621H) (Gluconobacter suboxydans) protein is Histidinol-phosphate aminotransferase 2.